Reading from the N-terminus, the 214-residue chain is Uridine kinase (214 aa).

Residue 15-22 (GASASGKS) participates in ATP binding.

It belongs to the uridine kinase family.

The protein resides in the cytoplasm. The enzyme catalyses uridine + ATP = UMP + ADP + H(+). The catalysed reaction is cytidine + ATP = CMP + ADP + H(+). Its pathway is pyrimidine metabolism; CTP biosynthesis via salvage pathway; CTP from cytidine: step 1/3. It participates in pyrimidine metabolism; UMP biosynthesis via salvage pathway; UMP from uridine: step 1/1. The sequence is that of Uridine kinase from Aeromonas hydrophila subsp. hydrophila (strain ATCC 7966 / DSM 30187 / BCRC 13018 / CCUG 14551 / JCM 1027 / KCTC 2358 / NCIMB 9240 / NCTC 8049).